We begin with the raw amino-acid sequence, 275 residues long: MAIRIFAILFSIFSLATFAHAQEGTLERSDWRKFFSEFQAKGTIVVADERQADRAMLVFDPVRSKKRYSPASTFKIPHTLFALDAGAVRDEFQIFRWDGVNRGFAGHNQDQDLRSAMRNSTVWVYELFAKEIGDDKARRYLKKIDYGNAGPSTSNGDYWIEGSLAISAQEQIAFLRKLYRNELPFRVEHQRLVKDLMIVEAGRNWILRAKTGWEGRMGWWVGWVEWPTGSVFFALNIDTPNRMDDLFKREAIVRAILRSIEALPPNPAVNSDAAR.

The first 21 residues, 1 to 21 (MAIRIFAILFSIFSLATFAHA), serve as a signal peptide directing secretion. The Acyl-ester intermediate role is filled by Ser72. Lys75 is subject to N6-carboxylysine. 210 to 212 (KTG) serves as a coordination point for substrate.

It belongs to the class-D beta-lactamase family.

It catalyses the reaction a beta-lactam + H2O = a substituted beta-amino acid. Hydrolyzes oxacillin, first-generation cephalosporins and ceftazidime. Does not hydrolyze cefotaxime or carbapenems. This Pseudomonas aeruginosa protein is Beta-lactamase OXA-15 (bla).